The sequence spans 199 residues: FMN-dependent NADH:quinone oxidoreductase (199 aa).

Residue serine 10 participates in FMN binding.

The protein belongs to the azoreductase type 1 family. In terms of assembly, homodimer. Requires FMN as cofactor.

It carries out the reaction 2 a quinone + NADH + H(+) = 2 a 1,4-benzosemiquinone + NAD(+). It catalyses the reaction N,N-dimethyl-1,4-phenylenediamine + anthranilate + 2 NAD(+) = 2-(4-dimethylaminophenyl)diazenylbenzoate + 2 NADH + 2 H(+). Quinone reductase that provides resistance to thiol-specific stress caused by electrophilic quinones. Functionally, also exhibits azoreductase activity. Catalyzes the reductive cleavage of the azo bond in aromatic azo compounds to the corresponding amines. The chain is FMN-dependent NADH:quinone oxidoreductase from Cellvibrio japonicus (strain Ueda107) (Pseudomonas fluorescens subsp. cellulosa).